A 238-amino-acid polypeptide reads, in one-letter code: Ribosomal RNA small subunit methyltransferase G (238 aa).

Residues Gly77, Phe82, 128–129 (AE), and Arg146 each bind S-adenosyl-L-methionine. Residues 216–238 (KKRQTPKKYPRKPGTPNKEPLLK) form a disordered region.

Belongs to the methyltransferase superfamily. RNA methyltransferase RsmG family.

The protein resides in the cytoplasm. Its function is as follows. Specifically methylates the N7 position of guanine in position 535 of 16S rRNA. The chain is Ribosomal RNA small subunit methyltransferase G from Macrococcus caseolyticus (strain JCSC5402) (Macrococcoides caseolyticum).